Consider the following 147-residue polypeptide: Large ribosomal subunit protein uL16 (147 aa).

It belongs to the universal ribosomal protein uL16 family. Part of the 50S ribosomal subunit.

Functionally, binds 23S rRNA and is also seen to make contacts with the A and possibly P site tRNAs. This is Large ribosomal subunit protein uL16 from Clostridium tetani (strain Massachusetts / E88).